A 339-amino-acid polypeptide reads, in one-letter code: UDP-N-acetylglucosamine--N-acetylmuramyl-(pentapeptide) pyrophosphoryl-undecaprenol N-acetylglucosamine transferase (339 aa).

UDP-N-acetyl-alpha-D-glucosamine-binding positions include 9-11, Asn119, Arg160, Ser188, and Gln280; that span reads TGG.

This sequence belongs to the glycosyltransferase 28 family. MurG subfamily.

The protein localises to the cell inner membrane. The enzyme catalyses di-trans,octa-cis-undecaprenyl diphospho-N-acetyl-alpha-D-muramoyl-L-alanyl-D-glutamyl-meso-2,6-diaminopimeloyl-D-alanyl-D-alanine + UDP-N-acetyl-alpha-D-glucosamine = di-trans,octa-cis-undecaprenyl diphospho-[N-acetyl-alpha-D-glucosaminyl-(1-&gt;4)]-N-acetyl-alpha-D-muramoyl-L-alanyl-D-glutamyl-meso-2,6-diaminopimeloyl-D-alanyl-D-alanine + UDP + H(+). It participates in cell wall biogenesis; peptidoglycan biosynthesis. In terms of biological role, cell wall formation. Catalyzes the transfer of a GlcNAc subunit on undecaprenyl-pyrophosphoryl-MurNAc-pentapeptide (lipid intermediate I) to form undecaprenyl-pyrophosphoryl-MurNAc-(pentapeptide)GlcNAc (lipid intermediate II). The sequence is that of UDP-N-acetylglucosamine--N-acetylmuramyl-(pentapeptide) pyrophosphoryl-undecaprenol N-acetylglucosamine transferase from Thermus thermophilus (strain ATCC BAA-163 / DSM 7039 / HB27).